Consider the following 271-residue polypeptide: Undecaprenyl-diphosphatase (271 aa).

The next 8 membrane-spanning stretches (helical) occupy residues 5-25, 43-63, 80-100, 109-129, 145-165, 186-206, 215-235, and 246-266; these read LLIK…LPIS, FATM…VYYF, GFNL…IGIL, LFSP…MIVI, VSTS…FPGM, AEFS…FELV, LEWE…LIVV, and VLKP…FLIA.

Belongs to the UppP family.

The protein resides in the cell membrane. The catalysed reaction is di-trans,octa-cis-undecaprenyl diphosphate + H2O = di-trans,octa-cis-undecaprenyl phosphate + phosphate + H(+). In terms of biological role, catalyzes the dephosphorylation of undecaprenyl diphosphate (UPP). Confers resistance to bacitracin. This Caldanaerobacter subterraneus subsp. tengcongensis (strain DSM 15242 / JCM 11007 / NBRC 100824 / MB4) (Thermoanaerobacter tengcongensis) protein is Undecaprenyl-diphosphatase.